A 396-amino-acid polypeptide reads, in one-letter code: Probable tRNA sulfurtransferase (396 aa).

Residues N58–S169 enclose the THUMP domain. Residues L187–L188, Y212–F213, R269, G291, and Q300 contribute to the ATP site.

It belongs to the ThiI family.

The protein resides in the cytoplasm. The enzyme catalyses [ThiI sulfur-carrier protein]-S-sulfanyl-L-cysteine + a uridine in tRNA + 2 reduced [2Fe-2S]-[ferredoxin] + ATP + H(+) = [ThiI sulfur-carrier protein]-L-cysteine + a 4-thiouridine in tRNA + 2 oxidized [2Fe-2S]-[ferredoxin] + AMP + diphosphate. It catalyses the reaction [ThiS sulfur-carrier protein]-C-terminal Gly-Gly-AMP + S-sulfanyl-L-cysteinyl-[cysteine desulfurase] + AH2 = [ThiS sulfur-carrier protein]-C-terminal-Gly-aminoethanethioate + L-cysteinyl-[cysteine desulfurase] + A + AMP + 2 H(+). Its pathway is cofactor biosynthesis; thiamine diphosphate biosynthesis. Its function is as follows. Catalyzes the ATP-dependent transfer of a sulfur to tRNA to produce 4-thiouridine in position 8 of tRNAs, which functions as a near-UV photosensor. Also catalyzes the transfer of sulfur to the sulfur carrier protein ThiS, forming ThiS-thiocarboxylate. This is a step in the synthesis of thiazole, in the thiamine biosynthesis pathway. The sulfur is donated as persulfide by IscS. The protein is Probable tRNA sulfurtransferase of Halothermothrix orenii (strain H 168 / OCM 544 / DSM 9562).